Reading from the N-terminus, the 187-residue chain is 1,6-anhydro-N-acetylmuramyl-L-alanine amidase AmpD (187 aa).

The 139-residue stretch at 29 to 167 (TLLVVHNISL…APERKTDPGP (139 aa)) folds into the N-acetylmuramoyl-L-alanine amidase domain. His34 is a Zn(2+) binding site. Catalysis depends on Glu116, which acts as the Proton acceptor. Zn(2+)-binding residues include His154 and Asp164.

It belongs to the N-acetylmuramoyl-L-alanine amidase 2 family. It depends on Zn(2+) as a cofactor.

It is found in the cytoplasm. The catalysed reaction is Hydrolyzes the link between N-acetylmuramoyl residues and L-amino acid residues in certain cell-wall glycopeptides.. Its function is as follows. Involved in cell wall peptidoglycan recycling. Specifically cleaves the amide bond between the lactyl group of N-acetylmuramic acid and the alpha-amino group of the L-alanine in degradation products containing an anhydro N-acetylmuramyl moiety. The chain is 1,6-anhydro-N-acetylmuramyl-L-alanine amidase AmpD from Enterobacter cloacae.